A 270-amino-acid polypeptide reads, in one-letter code: ATP synthase subunit a (270 aa).

Helical transmembrane passes span 40–60 (IDSL…FYAV), 98–118 (IAPL…MDLV), 143–163 (DVNI…YYSI), 208–228 (LFGN…MLPW), and 239–259 (AIFH…LTIV).

It belongs to the ATPase A chain family. In terms of assembly, F-type ATPases have 2 components, CF(1) - the catalytic core - and CF(0) - the membrane proton channel. CF(1) has five subunits: alpha(3), beta(3), gamma(1), delta(1), epsilon(1). CF(0) has three main subunits: a(1), b(2) and c(9-12). The alpha and beta chains form an alternating ring which encloses part of the gamma chain. CF(1) is attached to CF(0) by a central stalk formed by the gamma and epsilon chains, while a peripheral stalk is formed by the delta and b chains.

Its subcellular location is the cell inner membrane. Key component of the proton channel; it plays a direct role in the translocation of protons across the membrane. The polypeptide is ATP synthase subunit a (Vibrio vulnificus (strain CMCP6)).